The primary structure comprises 319 residues: Telomere-binding protein cav (319 aa).

The tract at residues 107 to 312 (RRKMVQPYPE…SISFQNSGSE (206 aa)) is required for binding to Su(var)205. Disordered regions lie at residues 141–163 (WQKQ…DNEV) and 186–248 (PSDL…PDYY). 2 consecutive short sequence motifs (su(var)205-binding Pro-containing repeat) follow at residues 220 to 224 (PETQM) and 273 to 279 (PETEMNE). A compositionally biased stretch (polar residues) spans 291–311 (SMSIGPSINSDGSISFQNSGS). The disordered stretch occupies residues 291–319 (SMSIGPSINSDGSISFQNSGSEPIDVDVN).

In terms of assembly, interacts (via C-terminus) with Su(var)205 dimer (via hinge and chromoshadow domain) and with moi to form the terminin, telomere-capping, complex. Interacts with HP6, which is also part of the terminin complex.

The protein localises to the nucleus. The protein resides in the chromosome. It localises to the telomere. Binds to chromosome ends in a sequence-dependent manner and is required for telomere capping. The polypeptide is Telomere-binding protein cav (Drosophila yakuba (Fruit fly)).